The following is a 1040-amino-acid chain: Multidrug resistance protein MdtB (1040 aa).

The next 12 helical transmembrane spans lie at 25–45 (LLMA…PVAA), 347–367 (LMLA…NIPA), 369–389 (IIPG…MVFL), 396–416 (LTLM…IVVI), 440–460 (IGFT…PLLF), 472–492 (FAVT…TLTP), 537–557 (WLTL…WIVI), 863–883 (LGST…VLGV), 888–908 (FIHP…ALLA), 910–930 (IIAG…LIGI), 968–988 (ILMT…STGV), and 998–1018 (IAMV…TPVI).

This sequence belongs to the resistance-nodulation-cell division (RND) (TC 2.A.6) family. MdtB subfamily. As to quaternary structure, part of a tripartite efflux system composed of MdtA, MdtB and MdtC. MdtB forms a heteromultimer with MdtC.

Its subcellular location is the cell inner membrane. This chain is Multidrug resistance protein MdtB, found in Salmonella newport (strain SL254).